The chain runs to 224 residues: V-type ATP synthase subunit D (224 aa).

The interval 190 to 224 (REAGYTQKKIKAKIEGKNKEAREAAAATSHGSAAD) is disordered. Positions 201-212 (AKIEGKNKEARE) are enriched in basic and acidic residues. The span at 213–224 (AAAATSHGSAAD) shows a compositional bias: low complexity.

This sequence belongs to the V-ATPase D subunit family.

Functionally, produces ATP from ADP in the presence of a proton gradient across the membrane. The protein is V-type ATP synthase subunit D (atpD) of Deinococcus radiodurans (strain ATCC 13939 / DSM 20539 / JCM 16871 / CCUG 27074 / LMG 4051 / NBRC 15346 / NCIMB 9279 / VKM B-1422 / R1).